A 433-amino-acid chain; its full sequence is E3 ubiquitin-protein ligase RGLG5 (433 aa).

A disordered region spans residues 1 to 61; that stretch reads MGGSSSKESP…SYNSGRQTPK (61 aa). The N-myristoyl glycine moiety is linked to residue Gly2. Low complexity predominate over residues 22-39; sequence SVSGSSSYSSAWDQSSYY. Positions 40-61 are enriched in polar residues; that stretch reads QTPNHPSASPVSSYNSGRQTPK. One can recognise a VWFA domain in the interval 93–313; the sequence is NLIVGIDVTK…KEAEFALSAL (221 aa). Residues 340 to 383 are disordered; that stretch reads IALPPPTYATQSMRNSPRTSRSTSFQNKPYDNGVSSTPPSTTHN. The segment covering 347–383 has biased composition (polar residues); it reads YATQSMRNSPRTSRSTSFQNKPYDNGVSSTPPSTTHN. The RING-type zinc-finger motif lies at 390–423; sequence CPVCLVSAKNMAFNCGHQTCAGCGEDLHVCPICR.

As to quaternary structure, interacts with PP2CA. Post-translationally, N-myristoylated.

The protein localises to the cell membrane. It carries out the reaction S-ubiquitinyl-[E2 ubiquitin-conjugating enzyme]-L-cysteine + [acceptor protein]-L-lysine = [E2 ubiquitin-conjugating enzyme]-L-cysteine + N(6)-ubiquitinyl-[acceptor protein]-L-lysine.. Together with RGLG1, mediates the ubiquitination and subsequent proteasomal degradation of the target protein PP2CA. Functions as a positive regulator of abscisic acid (ABA) signaling through ABA-dependent degradation of PP2CA, a major inhibitor of ABA signaling. The chain is E3 ubiquitin-protein ligase RGLG5 from Arabidopsis thaliana (Mouse-ear cress).